The sequence spans 638 residues: DNA mismatch repair protein MutL (638 aa).

The tract at residues glycine 398–glutamate 435 is disordered.

Belongs to the DNA mismatch repair MutL/HexB family.

Its function is as follows. This protein is involved in the repair of mismatches in DNA. It is required for dam-dependent methyl-directed DNA mismatch repair. May act as a 'molecular matchmaker', a protein that promotes the formation of a stable complex between two or more DNA-binding proteins in an ATP-dependent manner without itself being part of a final effector complex. This is DNA mismatch repair protein MutL from Shewanella baltica (strain OS155 / ATCC BAA-1091).